Here is a 241-residue protein sequence, read N- to C-terminus: Nuclear receptor-interacting protein 3 (241 aa).

The chain is Nuclear receptor-interacting protein 3 (NRIP3) from Homo sapiens (Human).